Reading from the N-terminus, the 620-residue chain is Synchronized import protein 1 (620 aa).

Residues 1–32 (MGRSKKRSRASSSRLNPLRKAGSNDNNKDTNV) form a disordered region. 8 ARM repeats span residues 25–64 (DNNKDTNVVNKKLQPLLQNLSSVVPNDRSIALSSISVLCE), 66–106 (AHMR…NLSL), 181–221 (DDIL…TTLD), 258–299 (ANEL…NIDP), 340–386 (IKLQ…NFLP), 435–470 (DSQDDLSIKIGRMGCIWALLKLIFPDGAFESENRAL), 471–510 (INVQMLNNSGFARGIIEEFQNNNDLELQQKCINVLSTYAM), and 564–607 (RGGF…TLDS).

This sequence belongs to the nuclear import and ribosome assembly adapter family. As to quaternary structure, forms a heterotrimeric complex with RPL5 and RPL11A or RPL11B; interaction of this complex with KAP104 allows the nuclear import of the heterotrimer. Component of a hexameric 5S RNP precursor complex, composed of 5S RNA, RRS1, RPF2, RPL5, RPL11A/RPL11B and SYO1; this complex acts as a precursor for ribosome assembly.

The protein resides in the cytoplasm. The protein localises to the nucleus. Its function is as follows. Nuclear import adapter that specifically recruits the two functionally and topologically linked ribosomal proteins RPL5 and RPL11 (encoded by RPL11A and RPL11B). Guarantees that this cargo pair remains bound together from the time of synthesis in the cytoplasm until delivery to the nascent 5S rRNA in the nucleus. In Saccharomyces cerevisiae (strain ATCC 204508 / S288c) (Baker's yeast), this protein is Synchronized import protein 1 (SYO1).